The chain runs to 287 residues: MANRKRDAGREALEKKGWWRSHRWLVLRRLCQFFVLGMFLSGPWFGVWILHGNYSSSLLFDTVPLTDPLMTLQSLASGHLPATVALTGAVIITVLYALAGKRLFCSWVCPLNPITDLANWLRRRFDLNQSATIPRHIRYVLLVVILVGSALTGTLIWEWINPVSLMGRSLVMGFGSGALLILALFLFDLLVVEHGWCGHICPVGALYGVLGSKGVITVAATDRQKCNRCMDCFHVCPEPHVLRAPVLDEQSPVQVTSRDCMTCGRCVDVCSEDVFTITTRWSSGAKS.

Residues 1 to 29 are Cytoplasmic-facing; it reads MANRKRDAGREALEKKGWWRSHRWLVLRR. The chain crosses the membrane as a helical span at residues 30–50; the sequence is LCQFFVLGMFLSGPWFGVWIL. Residues 51 to 79 lie on the Periplasmic side of the membrane; sequence HGNYSSSLLFDTVPLTDPLMTLQSLASGH. A helical transmembrane segment spans residues 80–100; the sequence is LPATVALTGAVIITVLYALAG. Residues 101 to 139 are Cytoplasmic-facing; the sequence is KRLFCSWVCPLNPITDLANWLRRRFDLNQSATIPRHIRY. The chain crosses the membrane as a helical span at residues 140 to 160; the sequence is VLLVVILVGSALTGTLIWEWI. Residues 161–170 are Periplasmic-facing; the sequence is NPVSLMGRSL. A helical membrane pass occupies residues 171–191; it reads VMGFGSGALLILALFLFDLLV. At 192–287 the chain is on the cytoplasmic side; that stretch reads VEHGWCGHIC…TTRWSSGAKS (96 aa). 4Fe-4S ferredoxin-type domains are found at residues 217–247 and 251–280; these read TVAA…APVL and SPVQ…ITTR. [4Fe-4S] cluster contacts are provided by C226, C229, C232, C236, C260, C263, C266, and C270.

In terms of assembly, interacts with NapC. The cofactor is [4Fe-4S] cluster.

The protein resides in the cell inner membrane. Functionally, required for electron transfer from ubiquinol, via NapC, to the periplasmic nitrate reductase NapAB complex. The polypeptide is Ferredoxin-type protein NapH (napH) (Escherichia coli (strain K12)).